Reading from the N-terminus, the 131-residue chain is MSSLSYCLLVTGPAYGTQQASSAYQFAQALITMGHKLNTVFFYREGVYNGNQLTSPASDEFDLVSAWQMMATEHRFSMHICIAAALRRGVIDAQQASELNLPVANLAEGFELSGLGTLAEAMLICDRVVQF.

Catalysis depends on Cys-81, which acts as the Cysteine persulfide intermediate.

This sequence belongs to the DsrE/TusD family. In terms of assembly, heterohexamer, formed by a dimer of trimers. The hexameric TusBCD complex contains 2 copies each of TusB, TusC and TusD. The TusBCD complex interacts with TusE.

The protein localises to the cytoplasm. In terms of biological role, part of a sulfur-relay system required for 2-thiolation of 5-methylaminomethyl-2-thiouridine (mnm(5)s(2)U) at tRNA wobble positions. Accepts sulfur from TusA and transfers it in turn to TusE. The polypeptide is Sulfurtransferase TusD (Photorhabdus laumondii subsp. laumondii (strain DSM 15139 / CIP 105565 / TT01) (Photorhabdus luminescens subsp. laumondii)).